A 308-amino-acid chain; its full sequence is tRNA dimethylallyltransferase (308 aa).

Residue 14–21 (GPTASGKT) participates in ATP binding. 16-21 (TASGKT) contributes to the substrate binding site. Interaction with substrate tRNA regions lie at residues 39-42 (DSAL), 163-167 (QRLSR), and 244-249 (RCVGYR).

This sequence belongs to the IPP transferase family. In terms of assembly, monomer. It depends on Mg(2+) as a cofactor.

The catalysed reaction is adenosine(37) in tRNA + dimethylallyl diphosphate = N(6)-dimethylallyladenosine(37) in tRNA + diphosphate. Functionally, catalyzes the transfer of a dimethylallyl group onto the adenine at position 37 in tRNAs that read codons beginning with uridine, leading to the formation of N6-(dimethylallyl)adenosine (i(6)A). The protein is tRNA dimethylallyltransferase of Shewanella baltica (strain OS223).